Here is a 384-residue protein sequence, read N- to C-terminus: Mitogen-activated protein kinase 8 (384 aa).

The Protein kinase domain maps to 26–321 (YQNLKPIGSG…VDEALQHPYI (296 aa)). ATP-binding positions include 32 to 40 (IGSGAQGIV) and Lys55. Residue Cys116 is modified to S-nitrosocysteine. The Proton acceptor role is filled by Asp151. Phosphothreonine; by MAP2K7 is present on Thr183. The short motif at 183 to 185 (TPY) is the TXY element. Position 185 is a phosphotyrosine; by MAP2K4 (Tyr185). A Phosphoserine modification is found at Ser377.

It belongs to the protein kinase superfamily. CMGC Ser/Thr protein kinase family. MAP kinase subfamily. As to quaternary structure, binds to at least four scaffolding proteins, MAPK8IP1/JIP-1, MAPK8IP2/JIP-2, MAPK8IP3/JIP-3/JSAP1 and SPAG9/MAPK8IP4/JIP-4. These proteins also bind other components of the JNK signaling pathway. Forms a complex with MAPK8IP1 and ARHGEF28. Interacts with TP53 and WWOX. Interacts with JAMP. Interacts with NFATC4. Interacts with MECOM; regulates JNK signaling. Interacts with PIN1; this interaction mediates MAPK8 conformational changes leading to the binding of MAPK8 to its substrates. Interacts with HSF1 (via D domain and preferentially with hyperphosphorylated form); this interaction occurs under both normal growth conditions and immediately upon heat shock. Interacts (phosphorylated form) with NFE2; the interaction phosphorylates NFE2 in undifferentiated cells. Interacts with GRIPAP1. Interacts with POU5F1; phosphorylates POU5F1 at 'Ser-347'. Found in a complex with SH3RF1, RAC1, MAP3K11/MLK3, MAP2K7/MKK7 and MAPK8IP1/JIP1. Found in a complex with SH3RF1, RAC2, MAP3K7/TAK1, MAP2K7/MKK7, MAPK8IP1/JIP1 and MAPK9/JNK2. It depends on Mg(2+) as a cofactor. In terms of processing, phosphorylated by TAOK2. Dually phosphorylated on Thr-183 and Tyr-185 by MAP2K7 and MAP2K4, which activates the enzyme. May be phosphorylated at Thr-183 and Tyr-185 by MAP3K1/MEKK1. Phosphorylated form is more concentrated at synapses than none-phosphorylated. As to expression, brain (at protein level).

Its subcellular location is the cytoplasm. It localises to the nucleus. It is found in the synapse. It catalyses the reaction L-seryl-[protein] + ATP = O-phospho-L-seryl-[protein] + ADP + H(+). The enzyme catalyses L-threonyl-[protein] + ATP = O-phospho-L-threonyl-[protein] + ADP + H(+). With respect to regulation, inhibited by SERPINB3. Activated by threonine and tyrosine phosphorylation by either of two dual specificity kinases, MAP2K4 and MAP2K7. MAP2K4 shows a strong preference for Tyr-185 while MAP2K7 phosphorylates Tyr-183 preferentially. Inhibited by dual specificity phosphatases, such as DUSP1. Its function is as follows. Serine/threonine-protein kinase involved in various processes such as cell proliferation, differentiation, migration, transformation and programmed cell death. Extracellular stimuli such as pro-inflammatory cytokines or physical stress stimulate the stress-activated protein kinase/c-Jun N-terminal kinase (SAP/JNK) signaling pathway. In this cascade, two dual specificity kinases MAP2K4/MKK4 and MAP2K7/MKK7 phosphorylate and activate MAPK8/JNK1. In turn, MAPK8/JNK1 phosphorylates a number of transcription factors, primarily components of AP-1 such as JUN, JDP2 and ATF2 and thus regulates AP-1 transcriptional activity. Phosphorylates the replication licensing factor CDT1, inhibiting the interaction between CDT1 and the histone H4 acetylase HBO1 to replication origins. Loss of this interaction abrogates the acetylation required for replication initiation. Promotes stressed cell apoptosis by phosphorylating key regulatory factors including p53/TP53 and Yes-associates protein YAP1. In T-cells, MAPK8 and MAPK9 are required for polarized differentiation of T-helper cells into Th1 cells. Contributes to the survival of erythroid cells by phosphorylating the antagonist of cell death BAD upon EPO stimulation. Mediates starvation-induced BCL2 phosphorylation, BCL2 dissociation from BECN1, and thus activation of autophagy. Phosphorylates STMN2 and hence regulates microtubule dynamics, controlling neurite elongation in cortical neurons. In the developing brain, through its cytoplasmic activity on STMN2, negatively regulates the rate of exit from multipolar stage and of radial migration from the ventricular zone. Phosphorylates several other substrates including heat shock factor protein 4 (HSF4), the deacetylase SIRT1, ELK1, or the E3 ligase ITCH. Phosphorylates the CLOCK-BMAL1 heterodimer and plays a role in the regulation of the circadian clock. Phosphorylates the heat shock transcription factor HSF1, suppressing HSF1-induced transcriptional activity. Phosphorylates POU5F1, which results in the inhibition of POU5F1's transcriptional activity and enhances its proteasomal degradation. Phosphorylates JUND and this phosphorylation is inhibited in the presence of MEN1. In neurons, phosphorylates SYT4 which captures neuronal dense core vesicles at synapses. Phosphorylates EIF4ENIF1/4-ET in response to oxidative stress, promoting P-body assembly. Phosphorylates SIRT6 in response to oxidative stress, stimulating its mono-ADP-ribosyltransferase activity. Phosphorylates NLRP3, promoting assembly of the NLRP3 inflammasome. Phosphorylates ALKBH5 in response to reactive oxygen species (ROS), promoting ALKBH5 sumoylation and inactivation. This Mus musculus (Mouse) protein is Mitogen-activated protein kinase 8 (Mapk8).